Consider the following 264-residue polypeptide: Thymidylate synthase (264 aa).

A dUMP-binding site is contributed by arginine 21. Histidine 51 lines the (6R)-5,10-methylene-5,6,7,8-tetrahydrofolate pocket. 126–127 (RR) serves as a coordination point for dUMP. Residue cysteine 146 is the Nucleophile of the active site. Residues 166–169 (RSCD), asparagine 177, and 207–209 (HLY) each bind dUMP. Residue aspartate 169 coordinates (6R)-5,10-methylene-5,6,7,8-tetrahydrofolate. Residue alanine 263 coordinates (6R)-5,10-methylene-5,6,7,8-tetrahydrofolate.

It belongs to the thymidylate synthase family. Bacterial-type ThyA subfamily. As to quaternary structure, homodimer.

The protein localises to the cytoplasm. The enzyme catalyses dUMP + (6R)-5,10-methylene-5,6,7,8-tetrahydrofolate = 7,8-dihydrofolate + dTMP. It participates in pyrimidine metabolism; dTTP biosynthesis. Functionally, catalyzes the reductive methylation of 2'-deoxyuridine-5'-monophosphate (dUMP) to 2'-deoxythymidine-5'-monophosphate (dTMP) while utilizing 5,10-methylenetetrahydrofolate (mTHF) as the methyl donor and reductant in the reaction, yielding dihydrofolate (DHF) as a by-product. This enzymatic reaction provides an intracellular de novo source of dTMP, an essential precursor for DNA biosynthesis. The polypeptide is Thymidylate synthase (Serratia proteamaculans (strain 568)).